The chain runs to 549 residues: CTP synthase (549 aa).

Residues 1 to 272 (MPPKSSTTKH…DAYVVRRMDL (272 aa)) are amidoligase domain. S19 is a binding site for CTP. S19 contacts UTP. ATP is bound by residues 20–25 (SLGKGL) and D77. Mg(2+) contacts are provided by D77 and E146. Residues 153 to 155 (DIE), 193 to 198 (KTKPTQ), and K229 each bind CTP. Residues 193-198 (KTKPTQ) and K229 each bind UTP. A Glutamine amidotransferase type-1 domain is found at 301–548 (VGKYIDLPDA…VKAAVERKTS (248 aa)). G360 serves as a coordination point for L-glutamine. C387 functions as the Nucleophile; for glutamine hydrolysis in the catalytic mechanism. L-glutamine contacts are provided by residues 388–391 (LGLQ), E411, and R473. Catalysis depends on residues H521 and E523.

The protein belongs to the CTP synthase family. Homotetramer.

It catalyses the reaction UTP + L-glutamine + ATP + H2O = CTP + L-glutamate + ADP + phosphate + 2 H(+). It carries out the reaction L-glutamine + H2O = L-glutamate + NH4(+). The catalysed reaction is UTP + NH4(+) + ATP = CTP + ADP + phosphate + 2 H(+). It participates in pyrimidine metabolism; CTP biosynthesis via de novo pathway; CTP from UDP: step 2/2. Allosterically activated by GTP, when glutamine is the substrate; GTP has no effect on the reaction when ammonia is the substrate. The allosteric effector GTP functions by stabilizing the protein conformation that binds the tetrahedral intermediate(s) formed during glutamine hydrolysis. Inhibited by the product CTP, via allosteric rather than competitive inhibition. Functionally, catalyzes the ATP-dependent amination of UTP to CTP with either L-glutamine or ammonia as the source of nitrogen. Regulates intracellular CTP levels through interactions with the four ribonucleotide triphosphates. The sequence is that of CTP synthase from Streptomyces coelicolor (strain ATCC BAA-471 / A3(2) / M145).